Here is a 98-residue protein sequence, read N- to C-terminus: MIPGGLTEAKPATIEIQEIANMVKPQLEEKTNETYEEFTAIEYKSQVVAGINYYIKIQTGDNRYIHIKVFKSLPQQSHSLILTGYQVDKTKDDELAGF.

Methionine 1 carries the post-translational modification N-acetylmethionine. Residues 46–50 (QVVAG) carry the Secondary area of contact motif.

This sequence belongs to the cystatin family.

It is found in the cytoplasm. Functionally, this is an intracellular thiol proteinase inhibitor. The sequence is that of Cystatin-A (CSTA) from Bos taurus (Bovine).